The chain runs to 330 residues: Biotin synthase (330 aa).

Positions 53–276 constitute a Radical SAM core domain; the sequence is NNIRLNVLLS…VFPFKELRLS (224 aa). The [4Fe-4S] cluster site is built by C68, C72, and C75. [2Fe-2S] cluster contacts are provided by C112, C144, C204, and R274.

It belongs to the radical SAM superfamily. Biotin synthase family. As to quaternary structure, homodimer. [4Fe-4S] cluster is required as a cofactor. Requires [2Fe-2S] cluster as cofactor.

It carries out the reaction (4R,5S)-dethiobiotin + (sulfur carrier)-SH + 2 reduced [2Fe-2S]-[ferredoxin] + 2 S-adenosyl-L-methionine = (sulfur carrier)-H + biotin + 2 5'-deoxyadenosine + 2 L-methionine + 2 oxidized [2Fe-2S]-[ferredoxin]. It participates in cofactor biosynthesis; biotin biosynthesis; biotin from 7,8-diaminononanoate: step 2/2. Functionally, catalyzes the conversion of dethiobiotin (DTB) to biotin by the insertion of a sulfur atom into dethiobiotin via a radical-based mechanism. The sequence is that of Biotin synthase from Streptococcus agalactiae serotype III (strain NEM316).